Consider the following 855-residue polypeptide: Pentatricopeptide repeat-containing protein At1g74750 (855 aa).

The tract at residues 21–40 (GSRPSAADGNSCTCAEDESG) is disordered. PPR repeat units follow at residues 358–392 (DGHT…GCKP), 393–427 (NTVT…GCEP), 428–462 (DRVT…GLSP), 463–497 (DTFT…GCTP), 498–532 (NLVT…GFQP), 533–567 (DKVT…NWVP), 568–602 (DEPV…GLRP), and 603–637 (NVPT…GLHP). One can recognise a Smr domain in the interval 755–838 (INLHVMSEGT…NSGCFVGSGE (84 aa)).

This sequence belongs to the PPR family. P subfamily.

This chain is Pentatricopeptide repeat-containing protein At1g74750, found in Arabidopsis thaliana (Mouse-ear cress).